A 4678-amino-acid polypeptide reads, in one-letter code: E3 ubiquitin-protein ligase MYCBP2 (4678 aa).

3 disordered regions span residues 87–127, 172–192, and 609–628; these read DRDQ…RSKS, SKNSVQSGESDSDEEEESKEP, and ASKGEDGESTKSRRQSKPYK. Basic residues predominate over residues 100–124; sequence SRNKKILNKKKLKRKQKSKSKVKTR. 4 positions are modified to phosphoserine: S127, S178, S181, and S183. RCC1 repeat units follow at residues 600 to 655, 699 to 755, 907 to 957, 958 to 1008, and 1010 to 1066; these read DGSI…VISK, NGEV…MMCP, KRDK…VLME, NGDV…VLLM, and GQVF…LRID. Residues 898–910 show a composition bias toward basic residues; that stretch reads RSHPAQLKHKRDK. The interval 898-928 is disordered; the sequence is RSHPAQLKHKRDKHKDGSGERGEKDASKITT. Positions 911 to 924 are enriched in basic and acidic residues; sequence HKDGSGERGEKDAS. Residues 1235 to 1386 are PHR domain 1; sequence NRFESHGGGW…GQIPQLLYRL (152 aa). A Phosphoserine modification is found at S1624. Residues 1726 to 1884 are PHR domain 2; sequence NRFTKTSQGR…GQIPQILYYR (159 aa). Cysteines 1748 and 1863 form a disulfide. 2 disordered regions span residues 1993 to 2012 and 2321 to 2340; these read FNPNQSTDSTTGNQPEQGLS and QQDQAKKPQRIPGSPAVTAA. Residues 1994–2012 are compositionally biased toward polar residues; the sequence is NPNQSTDSTTGNQPEQGLS. An RAE1 binding region spans residues 2022-2550; it reads VIESEHPYKP…NQHLGKSLLV (529 aa). Residues 2341–2443 form a Filamin repeat; that stretch reads SSNTDMTYGG…IDAGLEVKVK (103 aa). T2683 carries the phosphothreonine modification. 4 disordered regions span residues 2709 to 2931, 2943 to 2963, 2979 to 3020, and 3066 to 3085; these read LGNS…LHSE, TNSLTDSTCDDSSEFKSVDEG, EQEM…EPAK, and APIRSSLNSQQPTEEKETKL. Residues 2718 to 2733 show a composition bias toward polar residues; that stretch reads NISTSSKPASTSGKSE. The segment covering 2742–2760 has biased composition (basic and acidic residues); it reads LKPDGRMSRTTADQKKPRG. The residue at position 2769 (S2769) is a Phosphoserine. Basic and acidic residues predominate over residues 2775–2785; sequence DAAKLRSDSHS. The span at 2786 to 2810 shows a compositional bias: polar residues; that stretch reads RSLSPNHNTLQTLKSDGRMPSSSRA. Phosphoserine occurs at positions 2787, 2789, 2833, 2839, 2869, 2871, and 2920. Residues 2828 to 2843 show a composition bias toward low complexity; that stretch reads PANRSSPSGASSPRSS. Basic and acidic residues predominate over residues 2860-2871; the sequence is TKLDPPRERSKS. S2985 carries the post-translational modification Phosphoserine. Positions 2988-3001 are enriched in basic residues; the sequence is ISRKCANRHTRPKK. A phosphoserine mark is found at S3090, S3478, and S3505. The disordered stretch occupies residues 3605-3631; sequence PVEPEEEEDEENKTSKENSEQEKDTRV. Over residues 3616–3631 the composition is skewed to basic and acidic residues; it reads NKTSKENSEQEKDTRV. Residues 3719–3897 form the DOC domain; sequence SISIQSGFEA…VAQQRNCEAE (179 aa). The interval 3915 to 3934 is disordered; it reads SGDAEPTPEQEEKALLSSPE. At T3921 the chain carries Phosphothreonine. Phosphoserine occurs at positions 3931 and 3932. Zn(2+)-binding residues include C4428, C4431, C4446, H4448, H4451, C4454, C4475, C4478, C4544, and C4547. The RING-type; atypical zinc finger occupies 4428 to 4479; the sequence is CMICFTEALSAAPAIQLDCSHIFHLQCCRRVLENRWLGPRITFGFISCPICK. The interval 4539 to 4676 is tandem cysteine domain; that stretch reads YAYYVCYKCR…LGCGVCRNAH (138 aa). The active site involves C4558. Positions 4575, 4578, 4587, 4590, 4599, 4602, and 4603 each coordinate Zn(2+). C4610 is an active-site residue. C4617, C4620, C4638, C4652, H4658, C4669, and C4672 together coordinate Zn(2+).

The protein belongs to the RING-Cys relay (RCR) family. In terms of assembly, interacts with MYC. Interacts with TSC2 (tuberin) when TSC2 is in complex with TSC1 (hamartin). Interacts with FBXO45. Interacts with RAE1. Interacts with CPNE1 (via VWFA domain) and CPNE4 (via VWFA domain). Interacts with (sumoylated) RANGAP1; interaction with sumoylated RANGAP1 inhibits E3 ubiquitin-protein ligase activity and promotes MYCBP2 translocation to the nucleus. Interacts with RAN. Interacts with ATP13A2; the interaction inhibits the ubiquitination of TSC2 by MYCBP2. Interacts with USP11. Autoubiquitinated. As to expression, expressed in all tissues examined, expression is exceptionally abundant in brain and thymus. Colocalizes with TSC1 and TSC2 along the neurites and in the growth cones. Highly expressed in peripheral and central neurons. Colocalized with TSC1 in one of the filopodial extensions at the tip of a growth cone.

The protein localises to the nucleus. It localises to the cell projection. Its subcellular location is the axon. It is found in the cytoplasm. The protein resides in the cytoskeleton. It carries out the reaction [E2 ubiquitin-conjugating enzyme]-S-ubiquitinyl-L-cysteine + [acceptor protein]-L-threonine = [E2 ubiquitin-conjugating enzyme]-L-cysteine + [acceptor protein]-3-O-ubiquitinyl-L-threonine.. It functions in the pathway protein modification; protein ubiquitination. Functionally, atypical E3 ubiquitin-protein ligase which specifically mediates ubiquitination of threonine and serine residues on target proteins, instead of ubiquitinating lysine residues. Shows esterification activity towards both threonine and serine, with a preference for threonine, and acts via two essential catalytic cysteine residues that relay ubiquitin to its substrate via thioester intermediates. Interacts with the E2 enzymes UBE2D1, UBE2D3, UBE2E1 and UBE2L3. Plays a key role in neural development, probably by mediating ubiquitination of threonine residues on target proteins. Involved in different processes such as regulation of neurite outgrowth, synaptic growth, synaptogenesis and axon degeneration. Required for the formation of major central nervous system axon tracts. Required for proper axon growth by regulating axon navigation and axon branching: acts by regulating the subcellular location and stability of MAP3K12/DLK. Required for proper localization of retinogeniculate projections but not for eye-specific segregation. Regulates axon guidance in the olfactory system. Involved in Wallerian axon degeneration, an evolutionarily conserved process that drives the loss of damaged axons: acts by promoting destabilization of NMNAT2, probably via ubiquitination of NMNAT2. Catalyzes ubiquitination of threonine and/or serine residues on NMNAT2, consequences of threonine and/or serine ubiquitination are however unknown. Regulates the internalization of TRPV1 in peripheral sensory neurons. Mediates ubiquitination and subsequent proteasomal degradation of TSC2/tuberin. Independently of the E3 ubiquitin-protein ligase activity, also acts as a guanosine exchange factor (GEF) for RAN in neurons of dorsal root ganglia. May function as a facilitator or regulator of transcriptional activation by MYC. Acts in concert with HUWE1 to regulate the circadian clock gene expression by promoting the lithium-induced ubiquination and degradation of NR1D1. The sequence is that of E3 ubiquitin-protein ligase MYCBP2 from Homo sapiens (Human).